We begin with the raw amino-acid sequence, 154 residues long: Cytochrome c oxidase subunit 5A, mitochondrial (154 aa).

The transit peptide at 1-45 (MLAAALRRCXASVRVLLPKPGAAAPSSWSSSAFRATAAIQSVRCY) directs the protein to the mitochondrion. The short motif at 2 to 21 (LAAALRRCXASVRVLLPKPG) is the SIFI-degron element. 2 positions are modified to N6-acetyllysine: K91 and K117. Position 145 is a phosphothreonine (T145).

This sequence belongs to the cytochrome c oxidase subunit 5A family. Component of the cytochrome c oxidase (complex IV, CIV), a multisubunit enzyme composed of 14 subunits. The complex is composed of a catalytic core of 3 subunits MT-CO1, MT-CO2 and MT-CO3, encoded in the mitochondrial DNA, and 11 supernumerary subunits COX4I, COX5A, COX5B, COX6A, COX6B, COX6C, COX7A, COX7B, COX7C, COX8 and NDUFA4, which are encoded in the nuclear genome. The complex exists as a monomer or a dimer and forms supercomplexes (SCs) in the inner mitochondrial membrane with NADH-ubiquinone oxidoreductase (complex I, CI) and ubiquinol-cytochrome c oxidoreductase (cytochrome b-c1 complex, complex III, CIII), resulting in different assemblies (supercomplex SCI(1)III(2)IV(1) and megacomplex MCI(2)III(2)IV(2)). Interacts with AFG1L. Interacts with RAB5IF. In response to mitochondrial stress, the precursor protein is ubiquitinated by the SIFI complex in the cytoplasm before mitochondrial import, leading to its degradation. Within the SIFI complex, UBR4 initiates ubiquitin chain that are further elongated or branched by KCMF1.

The protein localises to the mitochondrion inner membrane. It participates in energy metabolism; oxidative phosphorylation. Component of the cytochrome c oxidase, the last enzyme in the mitochondrial electron transport chain which drives oxidative phosphorylation. The respiratory chain contains 3 multisubunit complexes succinate dehydrogenase (complex II, CII), ubiquinol-cytochrome c oxidoreductase (cytochrome b-c1 complex, complex III, CIII) and cytochrome c oxidase (complex IV, CIV), that cooperate to transfer electrons derived from NADH and succinate to molecular oxygen, creating an electrochemical gradient over the inner membrane that drives transmembrane transport and the ATP synthase. Cytochrome c oxidase is the component of the respiratory chain that catalyzes the reduction of oxygen to water. Electrons originating from reduced cytochrome c in the intermembrane space (IMS) are transferred via the dinuclear copper A center (CU(A)) of subunit 2 and heme A of subunit 1 to the active site in subunit 1, a binuclear center (BNC) formed by heme A3 and copper B (CU(B)). The BNC reduces molecular oxygen to 2 water molecules using 4 electrons from cytochrome c in the IMS and 4 protons from the mitochondrial matrix. This Notamacropus parma (Parma wallaby) protein is Cytochrome c oxidase subunit 5A, mitochondrial (COX5A).